The primary structure comprises 509 residues: Kynureninase 1 (509 aa).

Residues Leu-154, Thr-155, 183–186, Asp-270, His-273, and Tyr-295 contribute to the pyridoxal 5'-phosphate site; that span reads FPSD. Position 296 is an N6-(pyridoxal phosphate)lysine (Lys-296). Positions 345 and 373 each coordinate pyridoxal 5'-phosphate.

This sequence belongs to the kynureninase family. Homodimer. Pyridoxal 5'-phosphate is required as a cofactor.

Its subcellular location is the cytoplasm. The catalysed reaction is L-kynurenine + H2O = anthranilate + L-alanine + H(+). It catalyses the reaction 3-hydroxy-L-kynurenine + H2O = 3-hydroxyanthranilate + L-alanine + H(+). Its pathway is amino-acid degradation; L-kynurenine degradation; L-alanine and anthranilate from L-kynurenine: step 1/1. It functions in the pathway cofactor biosynthesis; NAD(+) biosynthesis; quinolinate from L-kynurenine: step 2/3. Its function is as follows. Catalyzes the cleavage of L-kynurenine (L-Kyn) and L-3-hydroxykynurenine (L-3OHKyn) into anthranilic acid (AA) and 3-hydroxyanthranilic acid (3-OHAA), respectively. In Chaetomium globosum (strain ATCC 6205 / CBS 148.51 / DSM 1962 / NBRC 6347 / NRRL 1970) (Soil fungus), this protein is Kynureninase 1.